A 226-amino-acid polypeptide reads, in one-letter code: Phosphoribosylformylglycinamidine synthase subunit PurQ (226 aa).

In terms of domain architecture, Glutamine amidotransferase type-1 spans Lys2 to Gly226. Cys86 (nucleophile) is an active-site residue. Catalysis depends on residues His195 and Glu197.

As to quaternary structure, part of the FGAM synthase complex composed of 1 PurL, 1 PurQ and 2 PurS subunits.

The protein localises to the cytoplasm. It catalyses the reaction N(2)-formyl-N(1)-(5-phospho-beta-D-ribosyl)glycinamide + L-glutamine + ATP + H2O = 2-formamido-N(1)-(5-O-phospho-beta-D-ribosyl)acetamidine + L-glutamate + ADP + phosphate + H(+). The enzyme catalyses L-glutamine + H2O = L-glutamate + NH4(+). The protein operates within purine metabolism; IMP biosynthesis via de novo pathway; 5-amino-1-(5-phospho-D-ribosyl)imidazole from N(2)-formyl-N(1)-(5-phospho-D-ribosyl)glycinamide: step 1/2. Functionally, part of the phosphoribosylformylglycinamidine synthase complex involved in the purines biosynthetic pathway. Catalyzes the ATP-dependent conversion of formylglycinamide ribonucleotide (FGAR) and glutamine to yield formylglycinamidine ribonucleotide (FGAM) and glutamate. The FGAM synthase complex is composed of three subunits. PurQ produces an ammonia molecule by converting glutamine to glutamate. PurL transfers the ammonia molecule to FGAR to form FGAM in an ATP-dependent manner. PurS interacts with PurQ and PurL and is thought to assist in the transfer of the ammonia molecule from PurQ to PurL. This chain is Phosphoribosylformylglycinamidine synthase subunit PurQ, found in Limosilactobacillus fermentum (strain NBRC 3956 / LMG 18251) (Lactobacillus fermentum).